A 208-amino-acid chain; its full sequence is MSIVTKALNLVPMVVEQTSRGERAYDIYSRLLKERLIFLVGPIDDHMANVIVAQLLFLEADNPEKDISIYINSPGGVVTAGMAIYDTMQYIKPDVSTICVGQAASMGALLLASGAAGKRYALPNSRVMIHQPLGGFQGQATDIDIHAREILTLRSRLNEILAKHTGQSLETIARDTERDNFKSAVDAQAYGLVDHVLERRPEESIQPS.

The Nucleophile role is filled by S105. H130 is a catalytic residue.

It belongs to the peptidase S14 family. In terms of assembly, fourteen ClpP subunits assemble into 2 heptameric rings which stack back to back to give a disk-like structure with a central cavity, resembling the structure of eukaryotic proteasomes.

Its subcellular location is the cytoplasm. The enzyme catalyses Hydrolysis of proteins to small peptides in the presence of ATP and magnesium. alpha-casein is the usual test substrate. In the absence of ATP, only oligopeptides shorter than five residues are hydrolyzed (such as succinyl-Leu-Tyr-|-NHMec, and Leu-Tyr-Leu-|-Tyr-Trp, in which cleavage of the -Tyr-|-Leu- and -Tyr-|-Trp bonds also occurs).. In terms of biological role, cleaves peptides in various proteins in a process that requires ATP hydrolysis. Has a chymotrypsin-like activity. Plays a major role in the degradation of misfolded proteins. The protein is ATP-dependent Clp protease proteolytic subunit of Xanthomonas campestris pv. campestris (strain 8004).